The primary structure comprises 1182 residues: NACHT, LRR and PYD domains-containing protein 1a (1182 aa).

Residues 1 to 23 form a disordered region; it reads MEESQSKQESSTKVAQHEGQEDV. The 310-residue stretch at 133-442 folds into the NACHT domain; sequence QLVIIEGAAG…EFFAAMSYIL (310 aa). 139–146 contacts ATP; it reads GAAGIGKS. LRR repeat units follow at residues 634–655, 691–711, and 720–743; these read NLEE…SLCT, SLTE…KMLC, and NLSI…RTLE. A disordered region spans residues 780–806; it reads QQRQQSGDKHMEPLGTEDEFWGPTGPV. A ZU5 region spans residues 799 to 932; it reads FWGPTGPVTT…HYAVLENPSF (134 aa). The 284-residue stretch at 799 to 1082 folds into the FIIND domain; the sequence is FWGPTGPVTT…LRPALPKIAT (284 aa). Residues 933 to 1082 form a UPA region; the sequence is SPMGILLRMI…LRPALPKIAT (150 aa). The CARD domain maps to 1092 to 1175; sequence HFMDQHREQL…HLVMDILEKL (84 aa).

This sequence belongs to the NLRP family. As to quaternary structure, interacts (via LRR repeats) with BCL2 and BCL2L1 (via the loop between motifs BH4 and BH3). Interacts with NOD2; this interaction is enhanced in the presence of muramyl dipeptide (MDP) and increases IL1B release. Interacts with EIF2AK2/PKR; this interaction requires EIF2AK2 activity, is accompanied by EIF2AK2 autophosphorylation and promotes inflammasome assembly in response to danger-associated signals. Interacts with MEFV; this interaction targets Nlrp1a to degradation by autophagy, hence preventing excessive IL1B- and IL18-mediated inflammation. Interacts with DPP9; leading to inhibit activation of the inflammasome. DPP9 acts via formation of a ternary complex, composed of a DPP9 homodimer, one full-length Nlrp1a protein, and one cleaved C-terminus of Nlrp1a (NACHT, LRR and PYD domains-containing protein 1a, C-terminus). Interacts with DPP8; leading to inhibit activation of the inflammasome, probably via formation of a ternary complex with DPP8. Interacts with the C-terminal part of Nlrp1a (NACHT, LRR and PYD domains-containing protein 1a, C-terminus) in absence of pathogens and other damage-associated signals. In terms of assembly, interacts with the N-terminal part of Nlrp1a (NACHT, LRR and PYD domains-containing protein 1a, N-terminus) in absence of pathogens and other damage-associated signals. Homomultimer; forms the Nlrp1a inflammasome polymeric complex, a filament composed of homopolymers of this form in response to pathogens and other damage-associated signals. Interacts (via CARD domain) with CASP1 (via CARD domain); leading to CASP1 activation. In terms of processing, autocatalytically cleaved. Autocatalytic cleavage in FIIND region occurs constitutively, prior to activation signals, and is required for inflammasome activity (IL1B release), possibly by facilitating CASP1 binding. Both N- and C-terminal parts remain associated non-covalently. Post-translationally, ubiquitinated in response to pathogen-associated signals, leading to its degradation by the proteasome and subsequent release of the cleaved C-terminal part of the protein (NACHT, LRR and PYD domains-containing protein 1a, C-terminus), which polymerizes and forms the Nlrp1a inflammasome. Highly expressed in hematopoietic stem cells and progenitor cells of both myeloid and lymphoid origin. The expression is highly strain-dependent. Not expressed in Balb/cJ animals, but widely expressed in C57BL/6J. Expressed in macrophages resistant to Bacillus anthracis lethal toxin, but not in toxin-sensitive macrophages, except in CAST/EiJ strain.

Its subcellular location is the cytoplasm. It localises to the cytosol. The protein localises to the nucleus. It is found in the inflammasome. With respect to regulation, nlrp1a inflammasome is activated by pathogens and other damage-associated signals: activation promotes ubiquitination and degradation of the N-terminal part, releasing the cleaved C-terminal part of the protein (NACHT, LRR and PYD domains-containing protein 1a, C-terminus), which polymerizes and forms the Nlrp1a inflammasome. Nlrp1a inflammasome is inhibited by DPP8 and DPP9, which sequester the C-terminal fragment of Nlrp1a (NACHT, LRR and PYD domains-containing protein 1a, C-terminus) in a ternary complex, thereby preventing Nlrp1a oligomerization and activation. Nlrp1a inflammasome is activated by Val-boroPro (Talabostat, PT-100), an inhibitor of dipeptidyl peptidases DPP8 and DPP9. Val-boroPro relieves inhibition of DPP8 and/or DPP9 by promoting disruption of the ternary complex, releasing its C-terminal part from autoinhibition. Its function is as follows. Acts as the sensor component of the Nlrp1a inflammasome, which mediates inflammasome activation in response to various pathogen-associated signals, leading to subsequent pyroptosis. Inflammasomes are supramolecular complexes that assemble in the cytosol in response to pathogens and other damage-associated signals and play critical roles in innate immunity and inflammation. Acts as a recognition receptor (PRR): recognizes specific pathogens and other damage-associated signals, and mediates the formation of the inflammasome polymeric complex. In response to pathogen-associated signals, the N-terminal part of Nlrp1a is degraded by the proteasome, releasing the cleaved C-terminal part of the protein (NACHT, LRR and PYD domains-containing protein 1a, C-terminus), which polymerizes to initiate the formation of the inflammasome complex: the inflammasome recruits pro-caspase-1 (proCASP1) and promotes caspase-1 (CASP1) activation, which subsequently cleaves and activates inflammatory cytokines IL1B and IL18 and gasdermin-D (GSDMD), leading to pyroptosis. In the absence of GSDMD expression, the Nlrp1a inflammasome is able to recruit and activate CASP8, leading to activation of gasdermin-E (GSDME). Activation of Nlrp1a inflammasome is also required for HMGB1 secretion; the active cytokines and HMGB1 stimulate inflammatory responses. When activated in the bone marrow, induces the pyroptosis of hematopoietic stem cells and progenitor cells of both myeloid and lymphoid lineages, hence allowing the removal of damaged cells, and the release of IL1B, which induces granulopoiesis. In terms of biological role, constitutes the precursor of the Nlrp1a inflammasome, which mediates autoproteolytic processing within the FIIND domain to generate the N-terminal and C-terminal parts, which are associated non-covalently in absence of pathogens and other damage-associated signals. Regulatory part that prevents formation of the Nlrp1a inflammasome: in absence of pathogens and other damage-associated signals, interacts with the C-terminal part of Nlrp1a (NACHT, LRR and PYD domains-containing protein 1a, C-terminus), preventing activation of the Nlrp1a inflammasome. In response to pathogen-associated signals, this part is ubiquitinated and degraded by the proteasome, releasing the cleaved C-terminal part of the protein, which polymerizes and forms the Nlrp1a inflammasome. Functionally, constitutes the active part of the Nlrp1a inflammasome. In absence of pathogens and other damage-associated signals, interacts with the N-terminal part of Nlrp1a (NACHT, LRR and PYD domains-containing protein 1a, N-terminus), preventing activation of the Nlrp1a inflammasome. In response to pathogen-associated signals, the N-terminal part of Nlrp1a is degraded by the proteasome, releasing this form, which polymerizes to form the Nlrp1a inflammasome complex: the Nlrp1a inflammasome complex then directly recruits pro-caspase-1 (proCASP1) and promotes caspase-1 (CASP1) activation, leading to gasdermin-D (GSDMD) cleavage and subsequent pyroptosis. This is NACHT, LRR and PYD domains-containing protein 1a from Mus musculus (Mouse).